Here is a 596-residue protein sequence, read N- to C-terminus: Selenocysteine-specific elongation factor (596 aa).

Residues 5 to 217 (RVNVNVGVLG…LLTSQISIPT (213 aa)) form the tr-type G domain. The segment at 14 to 21 (GHIDSGKT) is G1. 3 residues coordinate GDP: glycine 19, threonine 21, and alanine 22. GTP contacts are provided by glycine 19, threonine 21, and alanine 22. Threonine 21 provides a ligand contact to Mg(2+). The G2 stretch occupies residues 46–50 (GITLD). 2 residues coordinate Mg(2+): threonine 48 and aspartate 92. Residues 92-95 (DCPG) are G3. The interval 146-149 (NKID) is G4. Residues aspartate 149 and lysine 187 each contribute to the GDP site. 2 residues coordinate GTP: aspartate 149 and lysine 187. Residues 185-187 (AAK) are G5. Serine 537 is subject to Phosphoserine. Threonine 545 is subject to Phosphothreonine. Positions 547 to 553 (ALKKRAR) match the Nuclear localization signal motif. Residues 548–573 (LKKRARAGRGEATRQEESAERSEPSQ) are disordered. Positions 555 to 571 (GRGEATRQEESAERSEP) are enriched in basic and acidic residues. Arginine 556 carries the omega-N-methylarginine modification.

The protein belongs to the TRAFAC class translation factor GTPase superfamily. Classic translation factor GTPase family. SelB subfamily. Mg(2+) is required as a cofactor. The cofactor is Mn(2+).

The protein resides in the cytoplasm. Its subcellular location is the nucleus. It carries out the reaction GTP + H2O = GDP + phosphate + H(+). Translation factor required for the incorporation of the rare amino acid selenocysteine encoded by UGA codons. Replaces the eRF1-eRF3-GTP ternary complex for the insertion of selenocysteine directed by the UGA codon. Insertion of selenocysteine at UGA codons is mediated by SECISBP2 and EEFSEC: SECISBP2 (1) specifically binds the SECIS sequence once the 80S ribosome encounters an in-frame UGA codon and (2) contacts the RPS27A/eS31 of the 40S ribosome before ribosome stalling. (3) GTP-bound EEFSEC then delivers selenocysteinyl-tRNA(Sec) to the 80S ribosome and adopts a preaccommodated state conformation. (4) After GTP hydrolysis, EEFSEC dissociates from the assembly, selenocysteinyl-tRNA(Sec) accommodates, and peptide bond synthesis and selenoprotein elongation occur. The chain is Selenocysteine-specific elongation factor from Homo sapiens (Human).